Reading from the N-terminus, the 428-residue chain is GTPase Obg (428 aa).

Residues Met-1 to Leu-158 enclose the Obg domain. The interval Ala-117 to Gly-143 is disordered. In terms of domain architecture, OBG-type G spans Ala-159–Glu-329. GTP-binding positions include Gly-165–Ser-172, Phe-190–Val-194, Asp-212–Gly-215, Asn-282–Asp-285, and Ser-310–Val-312. 2 residues coordinate Mg(2+): Ser-172 and Thr-192. Residues Thr-350–Asp-428 enclose the OCT domain.

The protein belongs to the TRAFAC class OBG-HflX-like GTPase superfamily. OBG GTPase family. As to quaternary structure, monomer. Interacts with TasA (AC P54507) in pull-down experiments. It depends on Mg(2+) as a cofactor.

The protein resides in the cytoplasm. Inhibited by GDP; less than 20 uM ppGpp stimulates the GTPase, while higher concentrations inhibit. Functionally, necessary for the transition from vegetative growth to stage 0 or stage II of sporulation, but sporulation subsequent to these stages is unaffected at 45 degrees Celsius. This ts effect is probably due solely to the E-79 mutation. Required for expression of early sporulation genes, further suggesting a role in the induction of sporulation. Depletion effects on sporulation can be partially suppressed by missense mutations in spo0A. Strains depleted for obg stop growing after about 3 hours and do not induce the sigma-B factor following ethanol stress. It cofractionates with the ribosome and upstream stress response regulators RsbR, RsbS and RsbT in size fractionation columns, suggesting the ribosome might serve as a possible mediator of the activity of obg and the stress induction of sigma-B. In glycerol gradients partially associates with ribosomes; this is stabilized by a nonhydrolyzable GTP-analog and to a lesser extent GTP and GDP. In terms of biological role, an essential GTPase which binds GTP, GDP and possibly (p)ppGpp with moderate affinity, with high nucleotide exchange rates and a fairly low GTP hydrolysis rate. Plays a role in control of the cell cycle, stress response, ribosome biogenesis and in those bacteria that undergo differentiation, in morphogenesis control. The chain is GTPase Obg from Bacillus subtilis (strain 168).